The sequence spans 517 residues: Phosphatase and actin regulator 3 (517 aa).

The tract at residues 1–24 (MDQTPPARSEPLVSGIRTPPVRRN) is disordered. Phosphothreonine is present on threonine 29. Disordered stretches follow at residues 41 to 247 (KKKN…RPLP) and 260 to 320 (ATKH…SEEN). The stretch at 52–77 (SALEKKMAGRQGREELIKQGLLEMME) is one RPEL 1 repeat. Residues 54-68 (LEKKMAGRQGREELI) are compositionally biased toward basic and acidic residues. 2 stretches are compositionally biased toward polar residues: residues 92 to 129 (QPAQ…QDEL) and 157 to 172 (LPTT…SGSL). Residues 187-198 (PSPPLLPTPPPK) show a composition bias toward pro residues. Serine 188 is modified (phosphoserine). Phosphothreonine is present on threonine 194. A compositionally biased stretch (basic and acidic residues) spans 260–300 (ATKHRQDSFQGRECRGSPKKRMDVRLSRTSSMERGKERDEA). RPEL repeat units lie at residues 359–384 (ELLA…PRRT), 397–422 (MKLS…KQRN), and 435–460 (QRLT…IRFS). The stretch at 408–444 (AVEELERRNILKQRNDQTEQEERREIKQRLTRKLNQR) forms a coiled coil.

It belongs to the phosphatase and actin regulator family. As to quaternary structure, binds actin and PPP1CA; thus inhibiting the protein phosphatase 1 (PP1) activity. As to expression, diffusely expressed throughout the brain cortex, with highest levels in the cortex and the hippocampus and lower levels in the striatum and thalamus.

The protein localises to the nucleus matrix. The sequence is that of Phosphatase and actin regulator 3 (Phactr3) from Rattus norvegicus (Rat).